Consider the following 154-residue polypeptide: Protein X (154 aa).

The segment at 68 to 117 is mitochondrial targeting sequence; sequence PCALRFTSARCMETTVNAPRNLPKVLHKRTLGLSTMSTTGIETYFKDCVF.

The protein belongs to the orthohepadnavirus protein X family. As to quaternary structure, may form homodimer. May interact with host CEBPA, CFLAR, CREB1, DDB1, E4F1, HBXIP, HSPD1/HSP60, NFKBIA, POLR2E and SMAD4. Interacts with host SMC5-SMC6 complex and induces its degradation. Interacts with host TRPC4AP; leading to prevent ubiquitination of TRPC4AP. Interacts with host PLSCR1; this interaction promotes ubiquitination and degradation of HBx and impairs HBx-mediated cell proliferation. In terms of processing, a fraction may be phosphorylated in insect cells and HepG2 cells, a human hepatoblastoma cell line. Phosphorylated in vitro by host protein kinase C or mitogen-activated protein kinase. N-acetylated in insect cells.

Its subcellular location is the host cytoplasm. The protein localises to the host nucleus. The protein resides in the host mitochondrion. Functionally, multifunctional protein that plays a role in silencing host antiviral defenses and promoting viral transcription. Does not seem to be essential for HBV infection. May be directly involved in development of cirrhosis and liver cancer (hepatocellular carcinoma). Most of cytosolic activities involve modulation of cytosolic calcium. The effect on apoptosis is controversial depending on the cell types in which the studies have been conducted. May induce apoptosis by localizing in mitochondria and causing loss of mitochondrial membrane potential. May also modulate apoptosis by binding host CFLAR, a key regulator of the death-inducing signaling complex (DISC). Promotes viral transcription by using the host E3 ubiquitin ligase DDB1 to target the SMC5-SMC6 complex to proteasomal degradation. This host complex would otherwise bind to viral episomal DNA, and prevents its transcription. Moderately stimulates transcription of many different viral and cellular transcription elements. Promoters and enhancers stimulated by HBx contain DNA binding sites for NF-kappa-B, AP-1, AP-2, c-EBP, ATF/CREB, or the calcium-activated factor NF-AT. The polypeptide is Protein X (Orangutan hepatitis B virus (isolate Somad) (HBVoru)).